The primary structure comprises 863 residues: MTSAQLRAAFLDFFRERGHEVVPSSPLVPANDPTLLFTNAGMVPFKEVFLGREQRGYQRATSSQRCVRAGGKHNDLENVGYTARHHTFFEMLGNFSFGDYFKRDAIRYAWSFLTEVVELPPERLWVTVYEDDDEAAQIWLEEIGVDPARFRRIGAHDNFWSMGDTGPCGPCSEVFYDHGPEVPGGPPGSDEEDGDRYIEVWNLVFMQYDRDAEGNLNPLPSPSIDTGMGLERLAAVLQGVHDNFETDLFTPLIDAAGEIAGVSDRRKPSLKVVADHIRACSFLIVDGVLPSTEGRGYVLRRIIRRAVRHGYQLGIDEPFFYRLVDPLDAVMGEAFPELRDRREFVEKILFQEEKRFRETLEDGLALLDEYLGGNDSGVIDGEVVFKLYDTHGFPVDLTADIARERNLEVDYQGFEARMAEQRERARAASRFGGAREEVVDAGESRFTGYETLEDVGSVIGLYQDGRSVQRLQPGEEGMVVLDRTPFYAESGGQVGDRGEILANGLRFRVADTVKQGEAHGHLGRLESGELGVGDQVTARVDRGTREATVRNHSATHLLHAALREILGDHVQQKGSLVAPDRLRFDFSHYEAPSREDLERIEARVNQEILTNHPVEAAHMAYEEAVQVGAMALFGEKYGDTVRVISLGDYSQELCGGTHAARTGDIGLFKIIDETGVAGGVRRIEAITGERAIGWVQEAEGRLNRLADLLRVGPDNLVMKVEQLSERTREQEKEIERLKQKLATQAGRSLLDDAGEVAGVRFLATCVEGGGKGLRDTLDQLKNQLGSGVIVLAAVQGEKVQLVAGVTKDLTDRLAAGDLVNHVAAQVGGRGGGRADFAQAGGKDPSHVNDALASVEAWIKDNLT.

Residues histidine 552, histidine 556, cysteine 654, and histidine 658 each coordinate Zn(2+).

It belongs to the class-II aminoacyl-tRNA synthetase family. The cofactor is Zn(2+).

The protein resides in the cytoplasm. It catalyses the reaction tRNA(Ala) + L-alanine + ATP = L-alanyl-tRNA(Ala) + AMP + diphosphate. Its function is as follows. Catalyzes the attachment of alanine to tRNA(Ala) in a two-step reaction: alanine is first activated by ATP to form Ala-AMP and then transferred to the acceptor end of tRNA(Ala). Also edits incorrectly charged Ser-tRNA(Ala) and Gly-tRNA(Ala) via its editing domain. This Halorhodospira halophila (strain DSM 244 / SL1) (Ectothiorhodospira halophila (strain DSM 244 / SL1)) protein is Alanine--tRNA ligase.